Here is a 269-residue protein sequence, read N- to C-terminus: Arginine and glutamate-rich protein 1-B (269 aa).

A compositionally biased stretch (basic residues) spans 1-57; the sequence is MGRSRSRSSSRSKHSKTSKHSKKRSRSRSRSRDRERKRRSKSRESKRNRRRESRSRS. The necessary and sufficient for RNA binding stretch occupies residues 1-70; the sequence is MGRSRSRSSS…TATSRRDRER (70 aa). 2 disordered regions span residues 1–109 and 233–269; these read MGRS…MERQ and RMKL…KASE. 3 stretches are compositionally biased toward basic and acidic residues: residues 64 to 80, 89 to 109, and 233 to 249; these read SRRD…RIDI, SAVD…MERQ, and RMKL…EEQK. The tract at residues 71–269 is necessary and sufficient for transcriptional regulation; that stretch reads AASPPERIDI…KLSFSLKASE (199 aa).

This sequence belongs to the ARGLU1 family.

It localises to the nucleus. It is found in the nucleus speckle. Its subcellular location is the chromosome. Its function is as follows. Dual function regulator of gene expression; regulator of transcription and modulator of alternative splicing. General coactivator of nuclear receptor-induced gene expression. This chain is Arginine and glutamate-rich protein 1-B (arglu1b), found in Danio rerio (Zebrafish).